Here is a 380-residue protein sequence, read N- to C-terminus: Succinyl-diaminopimelate desuccinylase (380 aa).

H66 serves as a coordination point for Zn(2+). The active site involves D68. Position 99 (D99) interacts with Zn(2+). E135 (proton acceptor) is an active-site residue. Residues E136, E164, and H350 each coordinate Zn(2+).

The protein belongs to the peptidase M20A family. DapE subfamily. Homodimer. It depends on Zn(2+) as a cofactor. Co(2+) is required as a cofactor.

The catalysed reaction is N-succinyl-(2S,6S)-2,6-diaminopimelate + H2O = (2S,6S)-2,6-diaminopimelate + succinate. It participates in amino-acid biosynthesis; L-lysine biosynthesis via DAP pathway; LL-2,6-diaminopimelate from (S)-tetrahydrodipicolinate (succinylase route): step 3/3. Functionally, catalyzes the hydrolysis of N-succinyl-L,L-diaminopimelic acid (SDAP), forming succinate and LL-2,6-diaminopimelate (DAP), an intermediate involved in the bacterial biosynthesis of lysine and meso-diaminopimelic acid, an essential component of bacterial cell walls. This is Succinyl-diaminopimelate desuccinylase from Magnetococcus marinus (strain ATCC BAA-1437 / JCM 17883 / MC-1).